The following is a 655-amino-acid chain: MRPSQTELWLGLTLTLALLAVRWASAQAPIYVSSWAVRVTKGYQEAERLARKFGFVNLGQIFPDDQYFHLRHRGVAQQSLTPHWGHRLRLKKDPKVRWFEQQTLRRRVKRSLVVPTDPWFSKQWYMNKEIQQDLNILKAWNQGLTGRGVVISILDDGIEKDHPDLWANYDPLASYDFNDYDPDPQPRYTPNDENRHGTRCAGEVSATANNGFCGAGVAFNARIGGVRMLDGAITDIVEAQSLSLQPQHIHIYSASWGPEDDGRTVDGPGLLTQEAFRRGVTKGRQGLGTLFIWASGNGGLHYDNCNCDGYTNSIHTLSVGSTTRQGRVPWYSEACASTFTTTFSSGVVTDPQIVTTDLHHQCTDKHTGTSASAPLAAGMIALALEANPLLTWRDLQHLVVRASRPAQLQAEDWRINGVGRQVSHHYGYGLLDAGLLVDLARVWLPTKPQKKCAIRVVHTPTPILPRMLVPKNVTACSDGSRRRLIRSLEHVQVQLSLSYSRRGDLEIFLTSPMGTRSTLVAIRPLDISGQGYNNWIFMSTHYWDEDPQGLWTLGLENKGYYFNTGTLYYYTLLLYGTAEDMTARPQAPQVTSRARACVQRDTEGLCQESHSPLSILAGLCLISSQQWWWLYSHPQQPVTEGQASCHPPVTPAAAA.

The signal sequence occupies residues 1 to 26 (MRPSQTELWLGLTLTLALLAVRWASA). Residues 27–110 (QAPIYVSSWA…QQTLRRRVKR (84 aa)) constitute a propeptide that is removed on maturation. The Peptidase S8 domain occupies 123 to 437 (QWYMNKEIQQ…YGLLDAGLLV (315 aa)). Residues aspartate 155, histidine 196, and serine 370 each act as charge relay system in the active site. The P/Homo B domain maps to 446–580 (TKPQKKCAIR…TLLLYGTAED (135 aa)). N-linked (GlcNAc...) asparagine glycosylation occurs at asparagine 472.

This sequence belongs to the peptidase S8 family. Furin subfamily. The proPCSK4 form interacts with HSPA5; the interaction takes place at the endoplasmic reticulum. Post-translationally, N-glycosylated. In terms of processing, synthesized in the endoplasmic reticulum as a zymogen, is matured by autocatalytic cleavage between the prodomain and the catalytic domain. As to expression, expressed abundantly in the testis since postnatal Day 16. In testis, strongly detected in round and elongated spermatids as well as spermatocytes. Also observed in residual bodies engulfed by Sertoli cells at spermatogenic stages VIII and IX. In ovaries, expressed in macrophage-like cells of the ovarian theca, interstitium and corpora lutea.

The protein localises to the cytoplasmic vesicle. It localises to the secretory vesicle. The protein resides in the acrosome membrane. Proprotein convertase involved in the processing of hormone and other protein precursors at sites comprised of pairs of basic amino acid residues. In males, important for ADAM2 processing as well as other acrosomal proteins with roles in fertilization and critical for normal fertilization events such as sperm capacitation, acrosome reaction and binding of sperm to zona pellucida. Also plays a role in female fertility, involved in the regulation of trophoblast migration and placental development, may be through the proteolytical processing and activation of proteins such as IGF2. May also participate in folliculogenesis in the ovaries. This Mus musculus (Mouse) protein is Proprotein convertase subtilisin/kexin type 4 (Pcsk4).